The sequence spans 130 residues: MAATQYYGTGRRKTSTARVFAKVGSGNIIVNKRPLDVYFGRETARMVVRQPLELVEMTEKLDIYVTVKGGGITGQAGAIRHGITRALMELDESLRPTLRAAGFVTRDARQVERKKVGLRKARRRPQFSKR.

It belongs to the universal ribosomal protein uS9 family.

This chain is Small ribosomal subunit protein uS9, found in Shewanella amazonensis (strain ATCC BAA-1098 / SB2B).